Reading from the N-terminus, the 788-residue chain is Autophagy-related protein 9 (788 aa).

At 1 to 171 (MTDKSTFLSV…EAYMYYTGKG (171 aa)) the chain is on the cytoplasmic side. A compositionally biased stretch (basic and acidic residues) spans 32–42 (ILRRVEEEHAQ). The tract at residues 32–127 (ILRRVEEEHA…TGVANGGLPR (96 aa)) is disordered. A compositionally biased stretch (low complexity) spans 44-58 (SDNSNSDNDSGNDSD). The segment covering 101–112 (SFAQGTKTQTPI) has biased composition (polar residues). Residues 172 to 192 (LVSIILSRVLNMSTIMFVVVF) traverse the membrane as a helical segment. Over 193-222 (STYLGSCIDYSKIKGSRTLDEVHVKQCYAK) the chain is Lumenal. A helical transmembrane segment spans residues 223-243 (LGSFHVFVLWTFFVLWFMKLF). Topologically, residues 244 to 390 (QYVKDIRRLV…QILSTGLRRR (147 aa)) are cytoplasmic. Phenylalanine 391 is an intramembrane region. Over 392-479 (VFAAIMNVVF…PKEKTALVSK (88 aa)) the chain is Cytoplasmic. The helical transmembrane segment at 480 to 500 (FVSFIAGSFAAVLGIASLIDP) threads the bilayer. Topologically, residues 501-512 (ELFLMFEISANR) are lumenal. A helical membrane pass occupies residues 513 to 533 (TVLFYIGVFGSILAVSRSLIP). The Cytoplasmic portion of the chain corresponds to 534-579 (EETLVFDPEISLRYVAEFTHYLPPEWEGKLHTEQVKNEFSLMYEMR). An intramembrane segment occupies 580 to 600 (LIILLKELASIFLAPFILYYS). Residues 601–788 (LTQSCDDIVD…KKTDNMNLGA (188 aa)) are Cytoplasmic-facing. The tract at residues 715 to 736 (LSPAAPTATTATSGTATGAAPR) is disordered. Positions 716-734 (SPAAPTATTATSGTATGAA) are enriched in low complexity.

This sequence belongs to the ATG9 family. Homotrimer; forms a homotrimer with a central pore that forms a path between the two membrane leaflets. Post-translationally, phosphorylated by ATG1. ATG1 phosphorylation is required for preautophagosome elongation.

The protein resides in the preautophagosomal structure membrane. It localises to the cytoplasmic vesicle membrane. It is found in the golgi apparatus membrane. Its subcellular location is the endoplasmic reticulum membrane. The enzyme catalyses a 1,2-diacyl-sn-glycero-3-phosphocholine(in) = a 1,2-diacyl-sn-glycero-3-phosphocholine(out). It carries out the reaction a 1,2-diacyl-sn-glycero-3-phospho-L-serine(in) = a 1,2-diacyl-sn-glycero-3-phospho-L-serine(out). The catalysed reaction is a 1,2-diacyl-sn-glycero-3-phosphoethanolamine(in) = a 1,2-diacyl-sn-glycero-3-phosphoethanolamine(out). It catalyses the reaction a 1,2-diacyl-sn-glycero-3-phospho-(1D-myo-inositol-3-phosphate)(in) = a 1,2-diacyl-sn-glycero-3-phospho-(1D-myo-inositol-3-phosphate)(out). Phospholipid scramblase involved in autophagy and cytoplasm to vacuole transport (Cvt) vesicle formation. Cycles between the preautophagosomal structure/phagophore assembly site (PAS) and the cytoplasmic vesicle pool and supplies membrane for the growing autophagosome. Lipid scramblase activity plays a key role in preautophagosomal structure/phagophore assembly by distributing the phospholipids that arrive through ATG2 from the cytoplasmic to the luminal leaflet of the bilayer, thereby driving autophagosomal membrane expansion. Required for mitophagy. Also involved in endoplasmic reticulum-specific autophagic process and is essential for the survival of cells subjected to severe ER stress. Different machineries are required for anterograde trafficking to the PAS during either the Cvt pathway or bulk autophagy and for retrograde trafficking. The protein is Autophagy-related protein 9 of Yarrowia lipolytica (strain CLIB 122 / E 150) (Yeast).